Consider the following 331-residue polypeptide: MDEKTKIYDITIIGGGPVGLFAAFYAGMRNASVKIIESLPQLGGQLSTLYPEKYIYDIPGYPSVRAQELVNNLIQQMKPFDPTVALEEAVQSVEKQVDGTFEIITKKDTHYSKAIIITAGNGAFEPRRLDLPEAEQYEGTNIHYFINDLSRFSGRRVAVCGGGDSAVDWALMLEKVASSVAIVHRRNAFRAHEHSVNNLEKSSIAIKTPFIPTEVLGNGDKLTHITLQEVKGDTTETLEIDDFIINYGFVSSLGPIKNWGLELERNSIVVNSKMETSIPGIYCAGDICTYDGKVKLIATGFGEAPTAVNNAMNFIDPKTRVQPMHSTSLFE.

The FAD site is built by glutamate 37, glutamine 45, tyrosine 50, valine 90, phenylalanine 124, aspartate 286, and threonine 327.

The protein belongs to the ferredoxin--NADP reductase type 2 family. In terms of assembly, homodimer. Requires FAD as cofactor.

It catalyses the reaction 2 reduced [2Fe-2S]-[ferredoxin] + NADP(+) + H(+) = 2 oxidized [2Fe-2S]-[ferredoxin] + NADPH. The sequence is that of Ferredoxin--NADP reductase 2 from Listeria monocytogenes serovar 1/2a (strain ATCC BAA-679 / EGD-e).